The primary structure comprises 549 residues: Cytoplasmic trehalase (549 aa).

Residues Arg168, 175-176 (WD), Asn212, 221-223 (RSQ), 292-294 (RDE), and Gly324 each bind substrate. Residues Asp326 and Glu509 each act as proton donor/acceptor in the active site. Substrate is bound at residue Glu525.

It belongs to the glycosyl hydrolase 37 family. As to quaternary structure, monomer.

It localises to the cytoplasm. It carries out the reaction alpha,alpha-trehalose + H2O = alpha-D-glucose + beta-D-glucose. It participates in glycan degradation; trehalose degradation; D-glucose from alpha,alpha-trehalose: step 1/1. Its function is as follows. Hydrolyzes trehalose to glucose. Could be involved, in cells returning to low osmolarity conditions, in the utilization of the accumulated cytoplasmic trehalose, which was synthesized in response to high osmolarity. The chain is Cytoplasmic trehalase from Salmonella arizonae (strain ATCC BAA-731 / CDC346-86 / RSK2980).